An 813-amino-acid chain; its full sequence is Disintegrin and metalloproteinase domain-containing protein 33 (813 aa).

An N-terminal signal peptide occupies residues 1-29 (MGWRPRRARGTPLLLLLLLLLLWPVPGAG). A propeptide spanning residues 30–203 (VLQGHIPGQP…PGGPQSRGRR (174 aa)) is cleaved from the precursor. The Extracellular portion of the chain corresponds to 30 to 701 (VLQGHIPGQP…GPVQAENHDT (672 aa)). N-linked (GlcNAc...) asparagine glycosylation occurs at Asn109. The Cysteine switch motif lies at 131–138 (CTCSGMSG). Cys133 is a binding site for Zn(2+). A glycan (N-linked (GlcNAc...) asparagine) is linked at Asn145. A disordered region spans residues 184–205 (PGNKAGMTSLPGGPQSRGRREA). Positions 210–409 (KYLELYIVAD…GGGACLSNAP (200 aa)) constitute a Peptidase M12B domain. Residues Asn231 and Asn276 are each glycosylated (N-linked (GlcNAc...) asparagine). Disulfide bonds link Cys320-Cys404, Cys360-Cys388, and Cys361-Cys371. His345 contacts Zn(2+). Glu346 is an active-site residue. Positions 349 and 355 each coordinate Zn(2+). The region spanning 417–503 (PALCGNGFVE…HCPPDVYLLD (87 aa)) is the Disintegrin domain. The N-linked (GlcNAc...) asparagine glycan is linked to Asn448. 4 disulfide bridges follow: Cys475/Cys495, Cys653/Cys663, Cys657/Cys669, and Cys671/Cys680. The EGF-like domain occupies 649–681 (ELQRCLTACHSHGVCNSNHNCHCAPGWAPPFCD). Residues 702 to 722 (FLLAMLLSVLLPLLPGAGLAW) traverse the membrane as a helical segment. The Cytoplasmic segment spans residues 723-813 (CCYRLPGAHL…QVQMPRSCLW (91 aa)). Positions 746-813 (SGPKDGPHRD…QVQMPRSCLW (68 aa)) are disordered. Residues 780–791 (ENSHEPSSHPEK) are compositionally biased toward basic and acidic residues.

Requires Zn(2+) as cofactor. Post-translationally, the precursor is cleaved by a furin endopeptidase. As to expression, expressed in all tissues, except liver, with high expression in placenta, lung, spleen and veins.

It is found in the membrane. This is Disintegrin and metalloproteinase domain-containing protein 33 (ADAM33) from Homo sapiens (Human).